A 565-amino-acid chain; its full sequence is Calcium-dependent protein kinase 21 (565 aa).

Gly-2 carries the N-myristoyl glycine lipid modification. The interval 28 to 55 (PVPDAEAASPRKDGVDGDGDDVRGGGGG) is disordered. The segment covering 36-50 (SPRKDGVDGDGDDVR) has biased composition (basic and acidic residues). Residues 77-358 (YVLGKELGRG…AKQVLEHPWL (282 aa)) enclose the Protein kinase domain. Residues 83–91 (LGRGEFGVT) and Lys-106 contribute to the ATP site. Asp-224 serves as the catalytic Proton acceptor. The interval 364-394 (APNVSLGDAVRARLQQFSAMNKFKKKALGVV) is autoinhibitory domain. EF-hand domains lie at 401-436 (EEVD…NGQP), 437-472 (VPEP…LKKM), 473-500 (SNDE…ELRE), and 504-539 (PNEQ…GADW). The Ca(2+) site is built by Asp-414, Asp-416, Asn-418, His-420, Glu-425, Asp-450, Asp-452, Asn-454, Thr-456, Glu-461, Asp-486, Asp-488, Ser-490, Glu-497, Asp-517, Asp-519, Asp-521, Arg-523, and Glu-528.

It belongs to the protein kinase superfamily. Ser/Thr protein kinase family. CDPK subfamily. In terms of tissue distribution, expressed in spikelets and developing seeds.

Its subcellular location is the membrane. It catalyses the reaction L-seryl-[protein] + ATP = O-phospho-L-seryl-[protein] + ADP + H(+). The catalysed reaction is L-threonyl-[protein] + ATP = O-phospho-L-threonyl-[protein] + ADP + H(+). With respect to regulation, activated by calcium. Autophosphorylation may play an important role in the regulation of the kinase activity. May play a role in signal transduction pathways that involve calcium as a second messenger. Functions in signal transduction pathways that positively regulate responses to abscisic acid (ABA) and salt stress. The protein is Calcium-dependent protein kinase 21 of Oryza sativa subsp. japonica (Rice).